The primary structure comprises 360 residues: Phospho-N-acetylmuramoyl-pentapeptide-transferase (360 aa).

10 helical membrane-spanning segments follow: residues 21–41, 73–93, 94–114, 132–152, 168–188, 199–219, 239–259, 263–283, 288–308, and 338–358; these read YLSF…LWMG, TMGG…WADL, SNPY…VGFV, WKYF…YAHG, VMPQ…VGTS, GLAI…AWAT, LVVV…FNTY, VFMG…IAVL, LVLV…ILQV, and VIVR…ATLK.

It belongs to the glycosyltransferase 4 family. MraY subfamily. The cofactor is Mg(2+).

It is found in the cell inner membrane. The enzyme catalyses UDP-N-acetyl-alpha-D-muramoyl-L-alanyl-gamma-D-glutamyl-meso-2,6-diaminopimeloyl-D-alanyl-D-alanine + di-trans,octa-cis-undecaprenyl phosphate = di-trans,octa-cis-undecaprenyl diphospho-N-acetyl-alpha-D-muramoyl-L-alanyl-D-glutamyl-meso-2,6-diaminopimeloyl-D-alanyl-D-alanine + UMP. It participates in cell wall biogenesis; peptidoglycan biosynthesis. In terms of biological role, catalyzes the initial step of the lipid cycle reactions in the biosynthesis of the cell wall peptidoglycan: transfers peptidoglycan precursor phospho-MurNAc-pentapeptide from UDP-MurNAc-pentapeptide onto the lipid carrier undecaprenyl phosphate, yielding undecaprenyl-pyrophosphoryl-MurNAc-pentapeptide, known as lipid I. The chain is Phospho-N-acetylmuramoyl-pentapeptide-transferase from Vibrio atlanticus (strain LGP32) (Vibrio splendidus (strain Mel32)).